The primary structure comprises 258 residues: ATP synthase subunit a (258 aa).

5 helical membrane passes run 38-58, 94-114, 118-138, 193-213, and 215-235; these read KPVWFLWLGAAITFLFMYVGA, WFPYSLTLFIFLLVLNIIGLF, YPVTSNISFTATLALFTFVLT, ILAGHLIIFVFLSLILYFGLP, and AFVSVPFAVVFYAFEIFVAVI.

It belongs to the ATPase A chain family. In terms of assembly, F-type ATPases have 2 components, CF(1) - the catalytic core - and CF(0) - the membrane proton channel. CF(1) has five subunits: alpha(3), beta(3), gamma(1), delta(1), epsilon(1). CF(0) has three main subunits: a(1), b(2) and c(9-12). The alpha and beta chains form an alternating ring which encloses part of the gamma chain. CF(1) is attached to CF(0) by a central stalk formed by the gamma and epsilon chains, while a peripheral stalk is formed by the delta and b chains.

It localises to the cell membrane. In terms of biological role, key component of the proton channel; it plays a direct role in the translocation of protons across the membrane. The chain is ATP synthase subunit a from Rubrobacter xylanophilus (strain DSM 9941 / JCM 11954 / NBRC 16129 / PRD-1).